The following is a 362-amino-acid chain: Methylthioribose-1-phosphate isomerase (362 aa).

The Proton donor role is filled by Asp252.

It belongs to the eIF-2B alpha/beta/delta subunits family. MtnA subfamily.

The protein localises to the cytoplasm. The protein resides in the nucleus. It carries out the reaction 5-(methylsulfanyl)-alpha-D-ribose 1-phosphate = 5-(methylsulfanyl)-D-ribulose 1-phosphate. It participates in amino-acid biosynthesis; L-methionine biosynthesis via salvage pathway; L-methionine from S-methyl-5-thio-alpha-D-ribose 1-phosphate: step 1/6. In terms of biological role, catalyzes the interconversion of methylthioribose-1-phosphate (MTR-1-P) into methylthioribulose-1-phosphate (MTRu-1-P). The sequence is that of Methylthioribose-1-phosphate isomerase from Drosophila persimilis (Fruit fly).